Reading from the N-terminus, the 76-residue chain is UPF0346 protein LBA0976 (76 aa).

It belongs to the UPF0346 family.

The polypeptide is UPF0346 protein LBA0976 (Lactobacillus acidophilus (strain ATCC 700396 / NCK56 / N2 / NCFM)).